A 169-amino-acid polypeptide reads, in one-letter code: Proepiregulin (169 aa).

The N-terminal stretch at Met-1 to Ala-29 is a signal peptide. The propeptide occupies Val-30–Gln-62. Asn-47 carries an N-linked (GlcNAc...) asparagine glycan. At Val-60 to Val-119 the chain is on the extracellular side. The EGF-like domain maps to Ser-64–Glu-104. 3 disulfide bridges follow: Cys-68–Cys-81, Cys-76–Cys-92, and Cys-94–Cys-103. Residues Thr-109–Val-169 constitute a propeptide, removed in mature form. The chain crosses the membrane as a helical span at residues Ala-120–Phe-140. Residues Cys-141–Val-169 are Cytoplasmic-facing.

As to quaternary structure, interacts with EGFR and ERBB4. In normal adults, expressed predominantly in the placenta and peripheral blood leukocytes. High levels were detected in carcinomas of the bladder, lung, kidney and colon.

It localises to the secreted. The protein localises to the extracellular space. The protein resides in the cell membrane. Its function is as follows. Ligand of the EGF receptor/EGFR and ERBB4. Stimulates EGFR and ERBB4 tyrosine phosphorylation. Contributes to inflammation, wound healing, tissue repair, and oocyte maturation by regulating angiogenesis and vascular remodeling and by stimulating cell proliferation. This is Proepiregulin (EREG) from Homo sapiens (Human).